The chain runs to 82 residues: ATP synthase subunit c, chloroplastic (82 aa).

The next 2 helical transmembrane spans lie at 4 to 24 and 57 to 77; these read IISA…AIGP and LAFM…LLFA.

This sequence belongs to the ATPase C chain family. In terms of assembly, F-type ATPases have 2 components, F(1) - the catalytic core - and F(0) - the membrane proton channel. F(1) has five subunits: alpha(3), beta(3), gamma(1), delta(1), epsilon(1). F(0) has four main subunits: a(1), b(1), b'(1) and c(10-14). The alpha and beta chains form an alternating ring which encloses part of the gamma chain. F(1) is attached to F(0) by a central stalk formed by the gamma and epsilon chains, while a peripheral stalk is formed by the delta, b and b' chains.

It is found in the plastid. Its subcellular location is the chloroplast thylakoid membrane. In terms of biological role, f(1)F(0) ATP synthase produces ATP from ADP in the presence of a proton or sodium gradient. F-type ATPases consist of two structural domains, F(1) containing the extramembraneous catalytic core and F(0) containing the membrane proton channel, linked together by a central stalk and a peripheral stalk. During catalysis, ATP synthesis in the catalytic domain of F(1) is coupled via a rotary mechanism of the central stalk subunits to proton translocation. Its function is as follows. Key component of the F(0) channel; it plays a direct role in translocation across the membrane. A homomeric c-ring of between 10-14 subunits forms the central stalk rotor element with the F(1) delta and epsilon subunits. The protein is ATP synthase subunit c, chloroplastic of Heterosigma akashiwo (strain NIES-293 / 8280G21-1).